The following is a 244-amino-acid chain: Biosynthetic peptidoglycan transglycosylase (244 aa).

Residues 25–45 (LLLLLTAALLYQSWFLLHIVY) traverse the membrane as a helical segment.

Belongs to the glycosyltransferase 51 family.

It is found in the cell inner membrane. It carries out the reaction [GlcNAc-(1-&gt;4)-Mur2Ac(oyl-L-Ala-gamma-D-Glu-L-Lys-D-Ala-D-Ala)](n)-di-trans,octa-cis-undecaprenyl diphosphate + beta-D-GlcNAc-(1-&gt;4)-Mur2Ac(oyl-L-Ala-gamma-D-Glu-L-Lys-D-Ala-D-Ala)-di-trans,octa-cis-undecaprenyl diphosphate = [GlcNAc-(1-&gt;4)-Mur2Ac(oyl-L-Ala-gamma-D-Glu-L-Lys-D-Ala-D-Ala)](n+1)-di-trans,octa-cis-undecaprenyl diphosphate + di-trans,octa-cis-undecaprenyl diphosphate + H(+). It participates in cell wall biogenesis; peptidoglycan biosynthesis. Functionally, peptidoglycan polymerase that catalyzes glycan chain elongation from lipid-linked precursors. This Nitrosomonas europaea (strain ATCC 19718 / CIP 103999 / KCTC 2705 / NBRC 14298) protein is Biosynthetic peptidoglycan transglycosylase.